Here is a 106-residue protein sequence, read N- to C-terminus: MVNFLKTKADFDQALKDAGDKLVVIDFTASWCGPCQRIAPKYVEMAKEFPDVIFYKVDVDENDETAEAEKIQAMPTFKFYKSGKALSDYVQGANEAGLREKIKKNK.

The 105-residue stretch at 2–106 (VNFLKTKADF…GLREKIKKNK (105 aa)) folds into the Thioredoxin domain. Active-site nucleophile residues include cysteine 32 and cysteine 35. Cysteine 32 and cysteine 35 form a disulfide bridge.

The protein belongs to the thioredoxin family.

The protein localises to the cytoplasm. In terms of biological role, participates in various redox reactions through the reversible oxidation of its active center dithiol to a disulfide and catalyzes dithiol-disulfide exchange reactions. The protein is Thioredoxin (THIO) of Geodia cydonium (Sponge).